The chain runs to 544 residues: CTP synthase (544 aa).

The segment at 1 to 265 (MTRYIFITGG…DTQVLAYFGL (265 aa)) is amidoligase domain. S13 is a binding site for CTP. S13 lines the UTP pocket. Residue 14–19 (SLGKGL) coordinates ATP. Residue Y54 participates in L-glutamine binding. D71 is an ATP binding site. Mg(2+) is bound by residues D71 and E139. Residues 146–148 (DIE), 186–191 (KTKPTQ), and K222 contribute to the CTP site. UTP-binding positions include 186–191 (KTKPTQ) and K222. V240 is an ATP binding site. Residues 291 to 543 (TIAVVGKYTS…IKAAIEQSRL (253 aa)) form the Glutamine amidotransferase type-1 domain. G353 lines the L-glutamine pocket. C380 functions as the Nucleophile; for glutamine hydrolysis in the catalytic mechanism. Residues 381–384 (FGMQ), E404, and R472 each bind L-glutamine. Residues H516 and E518 contribute to the active site.

The protein belongs to the CTP synthase family. Homotetramer.

It catalyses the reaction UTP + L-glutamine + ATP + H2O = CTP + L-glutamate + ADP + phosphate + 2 H(+). The catalysed reaction is L-glutamine + H2O = L-glutamate + NH4(+). The enzyme catalyses UTP + NH4(+) + ATP = CTP + ADP + phosphate + 2 H(+). The protein operates within pyrimidine metabolism; CTP biosynthesis via de novo pathway; CTP from UDP: step 2/2. Allosterically activated by GTP, when glutamine is the substrate; GTP has no effect on the reaction when ammonia is the substrate. The allosteric effector GTP functions by stabilizing the protein conformation that binds the tetrahedral intermediate(s) formed during glutamine hydrolysis. Inhibited by the product CTP, via allosteric rather than competitive inhibition. Its function is as follows. Catalyzes the ATP-dependent amination of UTP to CTP with either L-glutamine or ammonia as the source of nitrogen. Regulates intracellular CTP levels through interactions with the four ribonucleotide triphosphates. In Azospirillum brasilense, this protein is CTP synthase.